The chain runs to 134 residues: Profilin-2 (134 aa).

A disulfide bridge connects residues Cys13 and Cys118. An Involved in PIP2 interaction motif is present at residues 84 to 100 (AVIRGKKGSGGITIKKT). Thr114 carries the post-translational modification Phosphothreonine.

This sequence belongs to the profilin family. In terms of assembly, occurs in many kinds of cells as a complex with monomeric actin in a 1:1 ratio. In terms of processing, phosphorylated by MAP kinases.

The protein localises to the cytoplasm. Its subcellular location is the cytoskeleton. In terms of biological role, binds to actin and affects the structure of the cytoskeleton. At high concentrations, profilin prevents the polymerization of actin, whereas it enhances it at low concentrations. This chain is Profilin-2, found in Olea europaea (Common olive).